Consider the following 355-residue polypeptide: MSYDVLTINPGSTSTKLAVYHGDKVLFEETVRHTMQEFADFNNVQEQFDFRWQVLRRVIDAFGYDVNKLDAVVGRGGLLRPVAGGTYMVTEKMLADLKNNKYGEHASNLGAMLAKKLADKLGIPSFIVDPVVVDEMQPVARFSGNELIARKSIFHALNHKAAGRKIAKELGSEYEKMNFVIAHLGGGISVAAHRQGKAVDVNNALDGDGPFSPERSGSLPMNDFLEACFSGKWTKRELHELIVGRGGMISYLGTNSMLDVENKVQAGDEDAIKAFDAMAYQVSKEIGACSVVLHGKIDAIILTGGLARSELFTSKIIEQTNWIARVIIEPGEDELEALNSGVQRVLAGIEKEKVY.

This sequence belongs to the acetokinase family.

The protein resides in the cytoplasm. It carries out the reaction butanoate + ATP = butanoyl phosphate + ADP. The sequence is that of Probable butyrate kinase from Listeria innocua serovar 6a (strain ATCC BAA-680 / CLIP 11262).